The primary structure comprises 330 residues: Ketol-acid reductoisomerase (NADP(+)) (330 aa).

The KARI N-terminal Rossmann domain maps to 3–184; that stretch reads LPVYYDKDID…GGGRMGVLET (182 aa). Residues 26-29, Ser-52, and Ser-54 each bind NADP(+); that span reads YGVQ. The active site involves His-109. Residue Gly-135 participates in NADP(+) binding. Residues 185–329 enclose the KARI C-terminal knotted domain; the sequence is SFKEECESDL…EILRAPFNHK (145 aa). Residues Asp-193, Glu-197, Glu-229, and Glu-233 each coordinate Mg(2+). Residue Ser-254 participates in substrate binding.

Belongs to the ketol-acid reductoisomerase family. Mg(2+) is required as a cofactor.

The catalysed reaction is (2R)-2,3-dihydroxy-3-methylbutanoate + NADP(+) = (2S)-2-acetolactate + NADPH + H(+). The enzyme catalyses (2R,3R)-2,3-dihydroxy-3-methylpentanoate + NADP(+) = (S)-2-ethyl-2-hydroxy-3-oxobutanoate + NADPH + H(+). It functions in the pathway amino-acid biosynthesis; L-isoleucine biosynthesis; L-isoleucine from 2-oxobutanoate: step 2/4. The protein operates within amino-acid biosynthesis; L-valine biosynthesis; L-valine from pyruvate: step 2/4. Functionally, involved in the biosynthesis of branched-chain amino acids (BCAA). Catalyzes an alkyl-migration followed by a ketol-acid reduction of (S)-2-acetolactate (S2AL) to yield (R)-2,3-dihydroxy-isovalerate. In the isomerase reaction, S2AL is rearranged via a Mg-dependent methyl migration to produce 3-hydroxy-3-methyl-2-ketobutyrate (HMKB). In the reductase reaction, this 2-ketoacid undergoes a metal-dependent reduction by NADPH to yield (R)-2,3-dihydroxy-isovalerate. The polypeptide is Ketol-acid reductoisomerase (NADP(+)) (Helicobacter pylori (strain J99 / ATCC 700824) (Campylobacter pylori J99)).